The primary structure comprises 1142 residues: Ribonucleoside-diphosphate reductase large subunit (1142 aa).

The disordered stretch occupies residues 1–33 (MANRPAASALAGARSPSERQEPREPEVAPPGGD). The segment covering 16–26 (PSERQEPREPE) has biased composition (basic and acidic residues). Residues 55–75 (AYRISDSSFVQCGSNCSMIID) carry the RIP homotypic interaction motif (RHIM) motif. A disordered region spans residues 118–322 (SGPSATTSVG…TDPGYPVPLE (205 aa)). Residues 119-132 (GPSATTSVGTQTSG) are compositionally biased toward polar residues. Pro residues predominate over residues 141–159 (TPEPQGPQAVPPPPPPPFP). Positions 164–179 (CCARRDARGGAEKDVG) are enriched in basic and acidic residues. The span at 192–205 (SETEDSDSSDEDTG) shows a compositional bias: acidic residues. Over residues 277 to 303 (GSATDPRASADSDSAAHAAAPQADVAP) the composition is skewed to low complexity. The interval 294–400 (AAAPQADVAP…CLDLPPVPPN (107 aa)) is alpha-crystallin domain. Substrate is bound by residues Thr-571, 586–587 (SC), Gly-617, 796–800 (NLCTE), and 973–977 (PTAAS). A disulfide bond links Cys-587 and Cys-813. Residue Asn-796 is the Proton acceptor of the active site. Cys-798 serves as the catalytic Cysteine radical intermediate. The active-site Proton acceptor is Glu-800.

This sequence belongs to the ribonucleoside diphosphate reductase large chain family. As to quaternary structure, heterotetramer composed of a homodimer of the large subunit (R1) and a homodimer of the small subunit (R2). Larger multisubunit protein complex are also active, composed of (R1)n(R2)n. May self-assemble (via RIP homotypic interaction motif/RHIM) into homomeric fibrillar amyloid structures. Interacts (via RHIM) with human RIPK1 (via RHIM). Interacts (via RHIM) with human RIPK3 (via RHIM). May interact (via RHIM) with human ZBP1 (via RHIM). Interacts (via C-terminus) with host CASP8.

The protein resides in the host cell membrane. The protein localises to the host endosome membrane. It carries out the reaction a 2'-deoxyribonucleoside 5'-diphosphate + [thioredoxin]-disulfide + H2O = a ribonucleoside 5'-diphosphate + [thioredoxin]-dithiol. Ribonucleoside-diphosphate reductase holoenzyme that provides the precursors necessary for viral DNA synthesis. Allows virus growth in non-dividing cells, as well as reactivation from latency in infected hosts. Catalyzes the biosynthesis of deoxyribonucleotides from the corresponding ribonucleotides. The N-terminal region confers antiapoptotic activity in differentiated cells such as neurons and is important for viral reactivation to increase neural survivability. Prevents host necroptosis by targeting host RIPK1 and RIPK3, thereby hampering the formation of necroptotic RIPK1-RIPK3 complexes. May form hetero-amyloid structures with host proteins RIPK3 or ZBP1, thereby preventing RIPK3- and ZBP1-mediated necroptosis. In addition, inhibits extrinsic apoptosis by targeting host CASP8. In Homo sapiens (Human), this protein is Ribonucleoside-diphosphate reductase large subunit.